The following is an 820-amino-acid chain: Probable ATP-dependent RNA helicase DDX23 (820 aa).

The span at 1-42 shows a compositional bias: basic and acidic residues; that stretch reads MAGELADKKDRDASPSKEERKRSRTPDRERDRDRDRKSSPSK. The tract at residues 1 to 244 is disordered; sequence MAGELADKKD…QKIREEKDKS (244 aa). 2 positions are modified to phosphoserine: S14 and S16. Residues 43–65 show a composition bias toward basic residues; sequence DRKRHRSRDRRRGGSRSRSRSRS. Residues 66–105 show a composition bias toward basic and acidic residues; sequence KSAERERRHKERERDKERDRNKKDRDRDKDGHRRDKDRKR. Residues S107 and S109 each carry the phosphoserine modification. 3 stretches are compositionally biased toward basic and acidic residues: residues 112–137, 147–226, and 233–244; these read RGKD…DKKP, LLAK…RETN, and GRQKIREEKDKS. The Q motif motif lies at 391–419; sequence RSWKDSSLPPHILEVIDKCGYKEPTPIQR. The 206-residue stretch at 422–627 folds into the Helicase ATP-binding domain; it reads IPIGLQNRDI…RSYLRRPAVV (206 aa). 435-442 lines the ATP pocket; the sequence is AETGSGKT. The DEAD box signature appears at 549–552; sequence DEAD. One can recognise a Helicase C-terminal domain in the interval 651–799; sequence KRKKLLAILE…SCPPELANHP (149 aa). Residues K686 and K811 each participate in a glycyl lysine isopeptide (Lys-Gly) (interchain with G-Cter in SUMO2) cross-link.

The protein belongs to the DEAD box helicase family. DDX23/PRP28 subfamily. The phosphorylated form (by SRPK2) is a component of the U4/U6-U5 tri-snRNP complex composed of the U4, U6 and U5 snRNAs and at least PRPF3, PRPF4, PRPF6, PRPF8, PRPF31, SNRNP200, TXNL4A, WDR57, SNRNP40, DDX23, CD2BP2, PPIH, SNU13, EFTUD2, SART1 and USP39. Identified in the spliceosome C complex. Interacts with ERBB4. Interacts with ERCC6. In vitro phosphorylated by CLK1 and U1 snRNP-associated protein kinase. Phosphorylated by SRPK2 and this phosphorylation is required for its association with the tri-snRNP (U4/U6-U5 tri-small nuclear ribonucleoproteins) and subsequent spliceosomal B complex formation. May be phosphorylated by SRPK2 on Ser residues in the SR domain; the phosphorylation is required for the removal of inappropriate R-loops during transcription.

The protein resides in the nucleus. It localises to the chromosome. It carries out the reaction ATP + H2O = ADP + phosphate + H(+). Functionally, involved in pre-mRNA splicing and its phosphorylated form (by SRPK2) is required for spliceosomal B complex formation. Independently of its spliceosome formation function, required for the suppression of incorrect R-loops formed during transcription; R-loops are composed of a DNA:RNA hybrid and the associated non-template single-stranded DNA. This chain is Probable ATP-dependent RNA helicase DDX23, found in Homo sapiens (Human).